The following is a 210-amino-acid chain: dITP/XTP pyrophosphatase (210 aa).

13-18 is a substrate binding site; the sequence is THNPGK. Residues Asp-45 and Asp-74 each coordinate Mg(2+). Asp-74 acts as the Proton acceptor in catalysis. Substrate is bound by residues Ser-75, 160–163, Lys-183, and 195–196; these read FGYD and HR.

This sequence belongs to the HAM1 NTPase family. In terms of assembly, homodimer. Mg(2+) is required as a cofactor.

The enzyme catalyses XTP + H2O = XMP + diphosphate + H(+). It carries out the reaction dITP + H2O = dIMP + diphosphate + H(+). It catalyses the reaction ITP + H2O = IMP + diphosphate + H(+). Pyrophosphatase that catalyzes the hydrolysis of nucleoside triphosphates to their monophosphate derivatives, with a high preference for the non-canonical purine nucleotides XTP (xanthosine triphosphate), dITP (deoxyinosine triphosphate) and ITP. Seems to function as a house-cleaning enzyme that removes non-canonical purine nucleotides from the nucleotide pool, thus preventing their incorporation into DNA/RNA and avoiding chromosomal lesions. The polypeptide is dITP/XTP pyrophosphatase (Rhodopseudomonas palustris (strain ATCC BAA-98 / CGA009)).